Reading from the N-terminus, the 113-residue chain is Protein TrbJ (113 aa).

The chain is Protein TrbJ (trbJ) from Escherichia coli (strain K12).